Consider the following 439-residue polypeptide: Glycosyl hydrolase DigH (439 aa).

The signal sequence occupies residues 1-27 (MDICSRNEKLAIRRPAILVALALLLCS). Residue Cys-28 is the site of N-palmitoyl cysteine attachment. The S-diacylglycerol cysteine moiety is linked to residue Cys-28. The interval 34 to 54 (ESMVTPPAGSKPPATTQQSSQ) is disordered.

The protein belongs to the glycosyl hydrolase-like 10 (GHL10) family.

Its subcellular location is the cell outer membrane. In terms of biological role, divisome-localized glycosyl hydrolase that cleaves peptide-free (denuded) peptidoglycans. The chain is Glycosyl hydrolase DigH from Escherichia coli O6:H1 (strain CFT073 / ATCC 700928 / UPEC).